Here is a 300-residue protein sequence, read N- to C-terminus: Protoheme IX farnesyltransferase 1 (300 aa).

The next 9 membrane-spanning stretches (helical) occupy residues valine 28–leucine 48, valine 54–isoleucine 74, alanine 100–asparagine 120, leucine 122–leucine 142, asparagine 149–threonine 169, alanine 176–isoleucine 196, cysteine 222–methionine 242, serine 243–tryptophan 263, and phenylalanine 280–alanine 300.

This sequence belongs to the UbiA prenyltransferase family. Protoheme IX farnesyltransferase subfamily.

It localises to the cell inner membrane. It catalyses the reaction heme b + (2E,6E)-farnesyl diphosphate + H2O = Fe(II)-heme o + diphosphate. It functions in the pathway porphyrin-containing compound metabolism; heme O biosynthesis; heme O from protoheme: step 1/1. Its function is as follows. Converts heme B (protoheme IX) to heme O by substitution of the vinyl group on carbon 2 of heme B porphyrin ring with a hydroxyethyl farnesyl side group. This is Protoheme IX farnesyltransferase 1 from Shewanella sp. (strain ANA-3).